The following is a 234-amino-acid chain: Probable pectate lyase F (234 aa).

The signal sequence occupies residues 1–17 (MRSTAAVLSILLPGALA). N-linked (GlcNAc...) asparagine glycosylation is present at Asn168.

Belongs to the polysaccharide lyase 3 family. Ca(2+) is required as a cofactor.

The protein localises to the secreted. The enzyme catalyses Eliminative cleavage of (1-&gt;4)-alpha-D-galacturonan to give oligosaccharides with 4-deoxy-alpha-D-galact-4-enuronosyl groups at their non-reducing ends.. Pectinolytic enzyme consist of four classes of enzymes: pectin lyase, polygalacturonase, pectin methylesterase and rhamnogalacturonase. Among pectinolytic enzymes, pectin lyase is the most important in depolymerization of pectin, since it cleaves internal glycosidic bonds of highly methylated pectins. Favors pectate, the anion, over pectin, the methyl ester. The polypeptide is Probable pectate lyase F (plyF) (Aspergillus terreus (strain NIH 2624 / FGSC A1156)).